The primary structure comprises 116 residues: Phage-like element PBSX protein XkdD (116 aa).

The chain is Phage-like element PBSX protein XkdD (xkdD) from Bacillus subtilis (strain 168).